Here is a 236-residue protein sequence, read N- to C-terminus: MSNQLIYSGKAKDIYETADDGIVLISYKDQVTMLNGAHKEMIEGKGSLNNQISALIFDRLNRVGVSTHFIKQLSETEQLNKRVAIIPLEVVLRNVAAGSFSKRFGVKEGQALDEPIIELYYKNDALDDPFINDEHVSFLKLATDEQIAYIKQETHRINAYLKEWFASVGLTLVDFKLEFGFDKEGMLILADEFSPDNCRLWDNAGRHMDKDVFRRQLGSLTQAYETVLERLRALDQ.

It belongs to the SAICAR synthetase family.

The enzyme catalyses 5-amino-1-(5-phospho-D-ribosyl)imidazole-4-carboxylate + L-aspartate + ATP = (2S)-2-[5-amino-1-(5-phospho-beta-D-ribosyl)imidazole-4-carboxamido]succinate + ADP + phosphate + 2 H(+). The protein operates within purine metabolism; IMP biosynthesis via de novo pathway; 5-amino-1-(5-phospho-D-ribosyl)imidazole-4-carboxamide from 5-amino-1-(5-phospho-D-ribosyl)imidazole-4-carboxylate: step 1/2. This chain is Phosphoribosylaminoimidazole-succinocarboxamide synthase, found in Streptococcus equi subsp. zooepidemicus (strain MGCS10565).